Reading from the N-terminus, the 451-residue chain is CDP-diacylglycerol--serine O-phosphatidyltransferase PssA (451 aa).

PLD phosphodiesterase domains are found at residues 27 to 224 and 239 to 451; these read VDFF…ELRD and SVTP…SRIL. Leucine 56, tyrosine 57, arginine 91, arginine 94, arginine 96, isoleucine 97, glutamate 132, alanine 133, valine 136, histidine 138, lysine 140, glycine 152, tyrosine 159, and arginine 167 together coordinate a CDP-1,2-diacyl-sn-glycerol. Histidine 138 is a catalytic residue. Aspartate 169 is an active-site residue. A CDP-1,2-diacyl-sn-glycerol contacts are provided by tyrosine 273, aspartate 305, phenylalanine 306, isoleucine 316, isoleucine 317, leucine 320, leucine 323, and tyrosine 324. Histidine 357 is an active-site residue. Residues lysine 359, asparagine 374, and arginine 378 each contribute to the a CDP-1,2-diacyl-sn-glycerol site. Glutamate 385 is an active-site residue. Residues leucine 438, isoleucine 447, isoleucine 450, and leucine 451 each contribute to the a CDP-1,2-diacyl-sn-glycerol site.

It belongs to the CDP-alcohol phosphatidyltransferase class-II family. Multimeric. Interacts with ACP, YbgC and PlsB, forming altogether a complex at the inner membrane. Monomeric and dimeric; existing in equilibrium, but the monomer probably exhibits preferential membrane association.

Its subcellular location is the cytoplasm. The protein resides in the cell inner membrane. It catalyses the reaction a CDP-1,2-diacyl-sn-glycerol + L-serine = a 1,2-diacyl-sn-glycero-3-phospho-L-serine + CMP + H(+). Its pathway is phospholipid metabolism; phosphatidylethanolamine biosynthesis; phosphatidylethanolamine from CDP-diacylglycerol: step 1/2. In terms of biological role, catalyzes the conversion of cytidine diphosphate diacylglycerol (CDP-DG) and L-serine into phosphatidylserine. Essential for biosynthesis of phosphatidylethanolamine, one of the major membrane phospholipids. Phosphatidylserine is later converted into phosphatidylethanolamine via the action of phosphatidylserine decarboxylase psd. Associates with the bacterial membrane for its role, which depends on the levels of anionic phospholipids in the membrane. In Escherichia coli (strain K12), this protein is CDP-diacylglycerol--serine O-phosphatidyltransferase PssA (pssA).